Here is a 1025-residue protein sequence, read N- to C-terminus: Synapsin (1025 aa).

Disordered regions lie at residues 1–94, 439–784, 872–910, and 995–1025; these read MKRG…SRES, VCRP…NYGS, YDSNSIASQGEGLNNPSDLPSYTRPSYSRSESNASKHSD, and DFSDSGSMSSIGSHTKRWSASKEEDDELDLK. Over residues 34-52 the composition is skewed to pro residues; sequence TKPPVAGGPPNMPPPPAPG. The span at 454–463 shows a compositional bias: low complexity; the sequence is SRSSVSSRAE. Positions 472 to 492 are enriched in pro residues; sequence PTPPLPAGPRPAPMGGPPPIP. Composition is skewed to low complexity over residues 499 to 546 and 594 to 626; these read VGSI…SSVS and SETSSGSGPGSVPSSAGPGSGFSSSFLGKQFSF. S539 bears the Phosphoserine mark. The span at 651 to 673 shows a compositional bias: polar residues; sequence TTASSAVRPESSVSVSDSRNTDT. The segment covering 690–702 has biased composition (basic and acidic residues); sequence QQERVNPFDKEPS. Over residues 703 to 725 the composition is skewed to low complexity; it reads KSGSAASIHTSSSSSISSSSISS. Residues 726 to 735 show a composition bias toward polar residues; that stretch reads RINRNGNAIQ. Residues 736–749 show a composition bias toward pro residues; the sequence is SPPPPAGPPPPPPT. Polar residues predominate over residues 750-759; sequence NVTAVGSNAN. The span at 760 to 772 shows a compositional bias: low complexity; that stretch reads SSSGYRNSFSSSL. Over residues 872 to 904 the composition is skewed to polar residues; the sequence is YDSNSIASQGEGLNNPSDLPSYTRPSYSRSESN. Residues 995-1007 show a composition bias toward low complexity; sequence DFSDSGSMSSIGS.

The protein belongs to the synapsin family. As to quaternary structure, identified in a complex with Syt1 and nwk. In terms of tissue distribution, widely expressed in the embryonic and adult nervous system synaptic terminals.

Its subcellular location is the synapse. Its function is as follows. Plays a significant role in nervous system function, which is subtle at the cellular level but manifests itself in complex behavior. This chain is Synapsin (Syn), found in Drosophila melanogaster (Fruit fly).